Consider the following 570-residue polypeptide: Probable diguanylate cyclase DgcQ (570 aa).

2 helical membrane passes run 20 to 40 (FGPGHVVNTCFLIVMLFSTLL) and 360 to 380 (IALTLLWVLFTAMLLISWGVI). The region spanning 428-563 (QPFSVIQLDL…GRNRICASDA (136 aa)) is the GGDEF domain. Mg(2+) is bound at residue aspartate 436. The substrate site is built by asparagine 444, histidine 449, and aspartate 453. Residue glutamate 479 participates in Mg(2+) binding. The Proton acceptor role is filled by glutamate 479.

Homodimer. Mg(2+) serves as cofactor.

It is found in the cell inner membrane. It catalyses the reaction 2 GTP = 3',3'-c-di-GMP + 2 diphosphate. It participates in glycan metabolism; bacterial cellulose biosynthesis. The protein operates within purine metabolism; 3',5'-cyclic di-GMP biosynthesis. Functionally, catalyzes the synthesis of cyclic-di-GMP (c-di-GMP) via the condensation of 2 GTP molecules. Cyclic-di-GMP is a second messenger which controls cell surface-associated traits in bacteria. Involved in the regulation of cellulose production. This is Probable diguanylate cyclase DgcQ from Salmonella choleraesuis (strain SC-B67).